Consider the following 499-residue polypeptide: Bifunctional purine biosynthesis protein PurH (499 aa).

The region spanning 1-144 (MIKRALISVF…KNFKDVVVLT (144 aa)) is the MGS-like domain.

This sequence belongs to the PurH family.

The enzyme catalyses (6R)-10-formyltetrahydrofolate + 5-amino-1-(5-phospho-beta-D-ribosyl)imidazole-4-carboxamide = 5-formamido-1-(5-phospho-D-ribosyl)imidazole-4-carboxamide + (6S)-5,6,7,8-tetrahydrofolate. The catalysed reaction is IMP + H2O = 5-formamido-1-(5-phospho-D-ribosyl)imidazole-4-carboxamide. Its pathway is purine metabolism; IMP biosynthesis via de novo pathway; 5-formamido-1-(5-phospho-D-ribosyl)imidazole-4-carboxamide from 5-amino-1-(5-phospho-D-ribosyl)imidazole-4-carboxamide (10-formyl THF route): step 1/1. It functions in the pathway purine metabolism; IMP biosynthesis via de novo pathway; IMP from 5-formamido-1-(5-phospho-D-ribosyl)imidazole-4-carboxamide: step 1/1. The sequence is that of Bifunctional purine biosynthesis protein PurH from Clostridium botulinum (strain 657 / Type Ba4).